The following is a 478-amino-acid chain: Dihydrolipoyl dehydrogenase (478 aa).

FAD-binding positions include Glu-34 to Cys-49, Lys-58, and Gly-122. Cysteines 49 and 54 form a disulfide. NAD(+) contacts are provided by residues Gly-188–Ile-192, Glu-211, Val-245, and Ala-276–Arg-279. 2 residues coordinate FAD: Asp-319 and Ala-327. His-451 (proton acceptor) is an active-site residue.

This sequence belongs to the class-I pyridine nucleotide-disulfide oxidoreductase family. Homodimer. FAD is required as a cofactor.

The protein resides in the cytoplasm. The enzyme catalyses N(6)-[(R)-dihydrolipoyl]-L-lysyl-[protein] + NAD(+) = N(6)-[(R)-lipoyl]-L-lysyl-[protein] + NADH + H(+). Functionally, the branched-chain alpha-keto dehydrogenase complex catalyzes the overall conversion of alpha-keto acids to acyl-CoA and CO(2). It contains multiple copies of 3 enzymatic components: branched-chain alpha-keto acid decarboxylase (E1), lipoamide acyltransferase (E2) and lipoamide dehydrogenase (E3). Its function is as follows. Also acts in the glycine cleavage system. In Pseudomonas aeruginosa (strain ATCC 15692 / DSM 22644 / CIP 104116 / JCM 14847 / LMG 12228 / 1C / PRS 101 / PAO1), this protein is Dihydrolipoyl dehydrogenase (lpdG).